The following is a 585-amino-acid chain: A-type ATP synthase subunit A (585 aa).

231–238 (GPFGSGKT) contributes to the ATP binding site.

It belongs to the ATPase alpha/beta chains family. As to quaternary structure, has multiple subunits with at least A(3), B(3), C, D, E, F, H, I and proteolipid K(x).

The protein localises to the cell membrane. It catalyses the reaction ATP + H2O + 4 H(+)(in) = ADP + phosphate + 5 H(+)(out). Its function is as follows. Component of the A-type ATP synthase that produces ATP from ADP in the presence of a proton gradient across the membrane. The A chain is the catalytic subunit. The protein is A-type ATP synthase subunit A of Thermococcus onnurineus (strain NA1).